Reading from the N-terminus, the 953-residue chain is Nonsense-mediated mRNA decay factor SMG8 (953 aa).

2 disordered regions span residues 571–604 (AEDAELDPDEEDEELPTGEREEQHITQSNGCSQP) and 629–653 (PCFDQSSSSEAESTCSGTSSEESNT). Residues 573 to 586 (DAELDPDEEDEELP) show a composition bias toward acidic residues. A compositionally biased stretch (polar residues) spans 595–604 (ITQSNGCSQP). Low complexity predominate over residues 634–653 (SSSSEAESTCSGTSSEESNT).

This sequence belongs to the SMG8 family.

In terms of biological role, involved in nonsense-mediated decay (NMD) of mRNAs containing premature stop codons. Probable component of kinase complex containing nonC and recruited to stalled ribosomes. The polypeptide is Nonsense-mediated mRNA decay factor SMG8 (Drosophila pseudoobscura pseudoobscura (Fruit fly)).